We begin with the raw amino-acid sequence, 1070 residues long: DNA-directed RNA polymerase subunit beta (1070 aa).

The protein belongs to the RNA polymerase beta chain family. In terms of assembly, in plastids the minimal PEP RNA polymerase catalytic core is composed of four subunits: alpha, beta, beta', and beta''. When a (nuclear-encoded) sigma factor is associated with the core the holoenzyme is formed, which can initiate transcription.

The protein resides in the plastid. It is found in the chloroplast. The catalysed reaction is RNA(n) + a ribonucleoside 5'-triphosphate = RNA(n+1) + diphosphate. Functionally, DNA-dependent RNA polymerase catalyzes the transcription of DNA into RNA using the four ribonucleoside triphosphates as substrates. The chain is DNA-directed RNA polymerase subunit beta from Spinacia oleracea (Spinach).